A 442-amino-acid polypeptide reads, in one-letter code: Cytokine receptor-like factor 3 (442 aa).

N-acetylmethionine is present on methionine 1. Residues 10-57 (ELLLQEARENVEAAQSYRRELGHRLEGLREARRQIKESASQTRDVLKQ) adopt a coiled-coil conformation. Positions 181 to 274 (PPVQIEELIE…PQIGHSTLVP (94 aa)) constitute a Fibronectin type-III domain.

It belongs to the cytokine receptor-like factor 3 family. Expressed in several embryonic and adult tissues, including adult and fetal brain, liver, spleen and pancreas. Expressed in adult, but not fetal kidney. Expressed in skin and squamous cell carcinoma (SCC) and in several other cancer types. Also detected in lesion actinic keratosis (AK).

The protein localises to the cytoplasm. May play a role in the negative regulation of cell cycle progression. The protein is Cytokine receptor-like factor 3 (CRLF3) of Homo sapiens (Human).